The following is a 258-amino-acid chain: Indole-3-glycerol phosphate synthase (258 aa).

The protein belongs to the TrpC family.

The catalysed reaction is 1-(2-carboxyphenylamino)-1-deoxy-D-ribulose 5-phosphate + H(+) = (1S,2R)-1-C-(indol-3-yl)glycerol 3-phosphate + CO2 + H2O. It functions in the pathway amino-acid biosynthesis; L-tryptophan biosynthesis; L-tryptophan from chorismate: step 4/5. This chain is Indole-3-glycerol phosphate synthase, found in Campylobacter jejuni (strain RM1221).